A 287-amino-acid polypeptide reads, in one-letter code: Putative sugar uptake protein spyM18_2243 (287 aa).

10 consecutive transmembrane segments (helical) span residues 4–26 (IFYA…KIGG), 33–50 (LGMT…WLIV), 55–72 (TLQL…WSIG), 85–107 (VSVA…GVLV), 117–134 (FVVG…FYFS), 154–171 (FRAL…AVLF), 181–200 (SVIL…FMSF), 207–229 (YVIK…LLAA), 234–256 (LAIA…ILFL), and 268–285 (VVTG…LGVV).

This sequence belongs to the GRP transporter (TC 2.A.7.5) family.

The protein resides in the cell membrane. The sequence is that of Putative sugar uptake protein spyM18_2243 from Streptococcus pyogenes serotype M18 (strain MGAS8232).